Here is a 347-residue protein sequence, read N- to C-terminus: GMP reductase (347 aa).

108–131 lines the NADP(+) pocket; sequence ADFEKTVQILALNPALNFVCIDVA. The K(+) site is built by G181 and G183. C186 serves as the catalytic Thioimidate intermediate. 216 to 239 contacts NADP(+); sequence IVSDGGCTMPGDVAKAFGGGADFV.

It belongs to the IMPDH/GMPR family. GuaC type 1 subfamily. In terms of assembly, homotetramer.

It catalyses the reaction IMP + NH4(+) + NADP(+) = GMP + NADPH + 2 H(+). Its function is as follows. Catalyzes the irreversible NADPH-dependent deamination of GMP to IMP. It functions in the conversion of nucleobase, nucleoside and nucleotide derivatives of G to A nucleotides, and in maintaining the intracellular balance of A and G nucleotides. This is GMP reductase from Salmonella paratyphi C (strain RKS4594).